We begin with the raw amino-acid sequence, 151 residues long: Large ribosomal subunit protein uL13 (151 aa).

The segment at 126-151 is disordered; it reads YPGSNHPHEAQKPEKLTIQTIPGGER. Residues 131-140 are compositionally biased toward basic and acidic residues; the sequence is HPHEAQKPEK.

This sequence belongs to the universal ribosomal protein uL13 family. Part of the 50S ribosomal subunit.

Functionally, this protein is one of the early assembly proteins of the 50S ribosomal subunit, although it is not seen to bind rRNA by itself. It is important during the early stages of 50S assembly. The chain is Large ribosomal subunit protein uL13 from Trichodesmium erythraeum (strain IMS101).